Here is a 720-residue protein sequence, read N- to C-terminus: Engulfment and cell motility protein 2 (720 aa).

Position 48 is a phosphotyrosine (tyrosine 48). In terms of domain architecture, ELMO spans 310-484 (QAQRDIIFEL…QVVREQITRA (175 aa)). Serine 503 bears the Phosphoserine mark. The 122-residue stretch at 553 to 674 (SSFRKIGNRR…LLGKDMSSEL (122 aa)) folds into the PH domain. An SH3-binding motif is present at residues 700-707 (PEAPPPVP). Position 717 is a phosphotyrosine (tyrosine 717).

As to quaternary structure, interacts directly with the SH3-domain of DOCK1 via its SH3-binding site. Probably forms a heterotrimeric complex with DOCK1 and RAC1. Interacts with ARHGEF16, DOCK4 and EPHA2; mediates activation of RAC1 by EPHA2. Interacts with ADGRB3. Interacts with AUTS2; the interaction is direct.

The protein localises to the cytoplasm. The protein resides in the cytosol. It localises to the membrane. Functionally, involved in cytoskeletal rearrangements required for phagocytosis of apoptotic cells and cell motility. Acts in association with DOCK1 and CRK. Was initially proposed to be required in complex with DOCK1 to activate Rac Rho small GTPases. May enhance the guanine nucleotide exchange factor (GEF) activity of DOCK1. The chain is Engulfment and cell motility protein 2 (ELMO2) from Bos taurus (Bovine).